Here is a 165-residue protein sequence, read N- to C-terminus: Late embryogenesis abundant protein D-113 (165 aa).

Residues 1–13 (MQSMKDAAASAKA) show a composition bias toward low complexity. Disordered stretches follow at residues 1 to 76 (MQSM…IGGT) and 92 to 165 (GGTG…YRSY). Over residues 14 to 60 (GMEKAKASMQEKVDQMKTRDPNEKEMARERKEERQEDAELRKQEARH) the composition is skewed to basic and acidic residues. Over residues 67 to 76 (HVGGGGIGGT) the composition is skewed to gly residues. Residues 132–155 (TTGNQDFPNAASNNAGTRRNTRGG) show a composition bias toward polar residues.

The protein belongs to the LEA type 1 family.

Its function is as follows. LEA proteins are late embryonic proteins abundant in higher plant seed embryos. There are two subsets of LEA proteins (5a and 5b), the first ones are expressed when the cotyledon weight reach 80 mg and the second set are expressed above 100 mg. The function of those proteins is not known. This is Late embryogenesis abundant protein D-113 from Gossypium hirsutum (Upland cotton).